The sequence spans 444 residues: Killer cell immunoglobulin-like receptor 3DL1 (444 aa).

The N-terminal stretch at 1 to 21 (MSLMVVSMACVGLFLVQRAGP) is a signal peptide. Residues 22–340 (HMGGQDKPFL…SKSGNPRHLH (319 aa)) are Extracellular-facing. 3 Ig-like C2-type domains span residues 42-102 (GGHV…HPHS), 137-202 (GERV…VTHT), and 237-300 (GESV…FRHS). Cystine bridges form between Cys49/Cys95, Cys144/Cys195, and Cys244/Cys293. 3 N-linked (GlcNAc...) asparagine glycosylation sites follow: Asn92, Asn179, and Asn273. The tract at residues 315–334 (VTGNPSSSWPSPTEPSSKSG) is disordered. The span at 319–333 (PSSSWPSPTEPSSKS) shows a compositional bias: low complexity. A helical membrane pass occupies residues 341–360 (ILIGTSVVIILFILLLFFLL). At 361-444 (HLWCSNKKNA…KPRSKVVSCP (84 aa)) the chain is on the cytoplasmic side. Disordered stretches follow at residues 375-394 (QEPAGNRTANSEDSDEQDPE) and 409-444 (RKITRPSQRPKTPPTDTILYTELPNAKPRSKVVSCP).

Belongs to the immunoglobulin superfamily.

Its subcellular location is the cell membrane. Its function is as follows. Receptor on natural killer (NK) cells for HLA Bw4 allele. Inhibits the activity of NK cells thus preventing cell lysis. This is Killer cell immunoglobulin-like receptor 3DL1 from Homo sapiens (Human).